Here is a 467-residue protein sequence, read N- to C-terminus: Fumarate hydratase class II (467 aa).

Residues 98 to 100 (SGT), R126, 129 to 132 (HPND), 139 to 141 (SSN), and T187 each bind substrate. The active-site Proton donor/acceptor is H188. S318 is a catalytic residue. Substrate is bound by residues S319 and 324–326 (KVN).

Belongs to the class-II fumarase/aspartase family. Fumarase subfamily. In terms of assembly, homotetramer.

Its subcellular location is the cytoplasm. The catalysed reaction is (S)-malate = fumarate + H2O. It functions in the pathway carbohydrate metabolism; tricarboxylic acid cycle; (S)-malate from fumarate: step 1/1. Involved in the TCA cycle. Catalyzes the stereospecific interconversion of fumarate to L-malate. In Salmonella typhimurium (strain LT2 / SGSC1412 / ATCC 700720), this protein is Fumarate hydratase class II.